Reading from the N-terminus, the 650-residue chain is Serine/threonine-protein kinase oca2 (650 aa).

A compositionally biased stretch (polar residues) spans 1 to 14 (MSVTPPNVQFNLNG). Disordered stretches follow at residues 1–210 (MSVT…PHDI) and 222–288 (HHGK…KSSA). Ser72 carries the phosphoserine modification. Residues 78 to 98 (NHIDPKLAEDRYRSSAARHFE) show a composition bias toward basic and acidic residues. The span at 140–154 (PSGSTGYTSPALSQN) shows a compositional bias: polar residues. Basic residues-rich tracts occupy residues 222 to 231 (HHGKHGHHGH) and 245 to 257 (HDKH…HEKH). Residues 258–279 (HSSLDLRRFFKSHQKTDKEKKP) show a composition bias toward basic and acidic residues. A Phosphoserine modification is found at Ser286. Residues 302–614 (GKFGRMLGSG…IHRVFADNWI (313 aa)) form the Protein kinase domain. ATP is bound by residues 308 to 316 (LGSGAGGSV) and Lys331. Residue Asp425 is the Proton acceptor of the active site. A disordered region spans residues 549–570 (PIRKTDESHSPNSKTDNSSTHK).

It belongs to the protein kinase superfamily. Ser/Thr protein kinase family.

It is found in the cytoplasm. The enzyme catalyses L-seryl-[protein] + ATP = O-phospho-L-seryl-[protein] + ADP + H(+). The catalysed reaction is L-threonyl-[protein] + ATP = O-phospho-L-threonyl-[protein] + ADP + H(+). Functionally, overexpression causes cell cycle arrest. In Schizosaccharomyces pombe (strain 972 / ATCC 24843) (Fission yeast), this protein is Serine/threonine-protein kinase oca2.